A 147-amino-acid polypeptide reads, in one-letter code: Hemoglobin subunit beta (147 aa).

V2 is subject to N-acetylvaline. Positions 3–147 (HLSGEEKSAV…VANALAHKYH (145 aa)) constitute a Globin domain. T13 carries the phosphothreonine modification. A Phosphoserine modification is found at S45. At K60 the chain carries N6-acetyllysine. H64 serves as a coordination point for heme b. K83 carries the post-translational modification N6-acetyllysine. H93 lines the heme b pocket. At C94 the chain carries S-nitrosocysteine. Position 145 is an N6-acetyllysine (K145).

Belongs to the globin family. Heterotetramer of two alpha chains and two beta chains. Red blood cells.

In terms of biological role, involved in oxygen transport from the lung to the various peripheral tissues. The sequence is that of Hemoglobin subunit beta (HBB) from Lepus europaeus (European hare).